The chain runs to 305 residues: Glycerol-3-phosphate dehydrogenase [NAD(P)+] (305 aa).

The NADPH site is built by Trp11, Arg31, and Lys79. Sn-glycerol 3-phosphate-binding residues include Lys79 and Gly107. Ala111 contacts NADPH. The sn-glycerol 3-phosphate site is built by Lys162, Asp215, Ser225, Arg226, and Asn227. Catalysis depends on Lys162, which acts as the Proton acceptor. NADPH is bound at residue Arg226. Residue Glu252 coordinates NADPH.

It belongs to the NAD-dependent glycerol-3-phosphate dehydrogenase family.

It is found in the cytoplasm. It carries out the reaction sn-glycerol 3-phosphate + NAD(+) = dihydroxyacetone phosphate + NADH + H(+). It catalyses the reaction sn-glycerol 3-phosphate + NADP(+) = dihydroxyacetone phosphate + NADPH + H(+). Its pathway is membrane lipid metabolism; glycerophospholipid metabolism. Its function is as follows. Catalyzes the reduction of the glycolytic intermediate dihydroxyacetone phosphate (DHAP) to sn-glycerol 3-phosphate (G3P), the key precursor for phospholipid synthesis. This chain is Glycerol-3-phosphate dehydrogenase [NAD(P)+], found in Gloeobacter violaceus (strain ATCC 29082 / PCC 7421).